We begin with the raw amino-acid sequence, 526 residues long: Arginine/ornithine antiporter ArcD1 (526 aa).

14 helical membrane-spanning segments follow: residues 8–28 (GIGL…GGVF), 41–61 (GGVV…VLSL), 88–108 (FISG…FAVL), 128–148 (LTIL…LLVM), 160–180 (IVLV…IVTF), 220–240 (VKGS…AAMM), 255–275 (IFGL…PFGF), 297–317 (VGGW…LGAW), 354–374 (LLLT…VADA), 378–398 (FVYL…LYLF), 407–427 (TSNI…LYYS), 428–448 (GWQF…LYAL), 466–486 (FILT…WLGL), and 495–515 (NTLL…YFVV).

Belongs to the amino acid-polyamine-organocation (APC) superfamily. Basic amino acid/polyamine antiporter (APA) (TC 2.A.3.2) family.

The protein localises to the cell membrane. It carries out the reaction L-ornithine(in) + L-arginine(out) = L-ornithine(out) + L-arginine(in). Functionally, catalyzes electroneutral exchange between L-arginine and L-ornithine. Can also efficiently translocate L-histidine and L-lysine. ArcD1 is the main L-arginine/L-ornithine exchanger in the arginine deiminase (ADI) pathway. This Lactococcus lactis subsp. cremoris (strain MG1363) protein is Arginine/ornithine antiporter ArcD1.